The primary structure comprises 136 residues: DUF35 domain-containing scaffold protein (136 aa).

The Zn(2+) site is built by Cys-25, Cys-38, and Cys-41.

It belongs to the scaffold protein DUF35 family. As to quaternary structure, interacts with acetoacetyl-CoA thiolase and HMG-CoA synthase (HMGCS) that catalyzes the first and second step in the mevalonate pathway, respectively.

Its function is as follows. Functions as a scaffold to connect the acetoacetyl-CoA thiolase and HMG-CoA synthase (HMGCS) dimers in the channeling thiolase/HMGCS complex, which allows for efficient coupling of the endergonic thiolase reaction with the exergonic HMGCS reaction. The polypeptide is DUF35 domain-containing scaffold protein (Pyrococcus furiosus (strain ATCC 43587 / DSM 3638 / JCM 8422 / Vc1)).